We begin with the raw amino-acid sequence, 92 residues long: C-C motif chemokine 4 (92 aa).

The first 23 residues, M1–S23, serve as a signal peptide directing secretion. Cystine bridges form between C34–C58 and C35–C74.

This sequence belongs to the intercrine beta (chemokine CC) family. Homodimer. Interacts with CCR5.

Its subcellular location is the secreted. Monokine with inflammatory and chemokinetic properties. This chain is C-C motif chemokine 4 (CCL4), found in Bos taurus (Bovine).